The following is a 469-amino-acid chain: Protein RUFY3 (469 aa).

T5 and T12 each carry phosphothreonine. Phosphoserine occurs at positions 34 and 49. Residue T51 is modified to Phosphothreonine. Residues 95–227 enclose the RUN domain; that stretch reads DSDYAPLQQF…IDANFCMKGE (133 aa). Coiled-coil stretches lie at residues 271-362 and 422-463; these read NRHL…VEKE and KSEL…AANK.

Interacts with PAK1. Interacts (via C-terminus) with Ras-related Rab-5 proteins. Interacts (via C-terminus) with Ras-related Rap-2 proteins. Interacts with PIK3CA and PIK3R1. Interacts (via N-terminus) with FSCN1; this interaction induces neuron axon development. Interacts with DBN1. Interacts (via the second coiled coil) with GTP-, but not GDP-bound ARL8A and ARL8B. Interacts with dynactin/DCTN1 and the dynein intermediate chain DYNC1I1/2. Directly interacts with DYNC1LI1. Post-translationally, phosphorylated by PAK1.

The protein resides in the cytoplasm. It localises to the endomembrane system. Its subcellular location is the cell projection. The protein localises to the invadopodium. It is found in the growth cone. The protein resides in the perikaryon. It localises to the filopodium. Its subcellular location is the lamellipodium. The protein localises to the lysosome. Its function is as follows. ARL8 effector that promotes the coupling of endolysosomes to dynein-dynactin for retrograde transport along microtubules. Acts by binding both GTP-bound ARL8 and dynein-dynactin. In nonneuronal cells, promotes concentration of endolysosomes in the juxtanuclear area. In hippocampal neurons, drives retrograde transport of endolysosomes from the axon to the soma. Plays a role in the generation of neuronal polarity formation and axon growth. Implicated in the formation of a single axon by developing neurons. May inhibit the formation of additional axons by inhibition of PI3K in minor neuronal processes. Plays a role in the formation of F-actin-enriched protrusive structures at the cell periphery. Plays a role in cytoskeletal organization by regulating the subcellular localization of FSCN1 and DBN1 at axonal growth cones. This Pongo abelii (Sumatran orangutan) protein is Protein RUFY3.